The sequence spans 266 residues: Calpain small subunit 1 (266 aa).

Residue Met-1 is modified to N-acetylmethionine. A Phosphoserine modification is found at Ser-6. The EF-hand 1; atypical domain occupies Glu-94–Arg-128. Residues Ala-107, Asp-110, Glu-112, Glu-117, Asp-135, Asp-150, Asp-152, Thr-154, Lys-156, and Glu-161 each coordinate Ca(2+). EF-hand domains are found at residues Phe-137–Lys-170, Asn-167–His-202, Leu-203–Leu-231, and Val-232–Ser-266. Lys-177 is subject to N6-acetyllysine. Residues Asp-180, Asp-182, Ser-184, Thr-186, Glu-191, and Asp-223 each contribute to the Ca(2+) site.

Homodimer or heterodimer of a large (catalytic) and a small (regulatory) subunit. In presence of calcium, the heterodimer dissociates. Post-translationally, the N-terminus is blocked.

Its subcellular location is the cytoplasm. It localises to the cell membrane. Regulatory subunit of the calcium-regulated non-lysosomal thiol-protease which catalyzes limited proteolysis of substrates involved in cytoskeletal remodeling and signal transduction. Essential for embryonic development. The protein is Calpain small subunit 1 (CAPNS1) of Oryctolagus cuniculus (Rabbit).